A 498-amino-acid chain; its full sequence is ATP synthase subunit beta, chloroplastic (498 aa).

Position 172–179 (172–179) interacts with ATP; that stretch reads GGAGVGKT.

It belongs to the ATPase alpha/beta chains family. As to quaternary structure, F-type ATPases have 2 components, CF(1) - the catalytic core - and CF(0) - the membrane proton channel. CF(1) has five subunits: alpha(3), beta(3), gamma(1), delta(1), epsilon(1). CF(0) has four main subunits: a(1), b(1), b'(1) and c(9-12).

The protein localises to the plastid. The protein resides in the chloroplast thylakoid membrane. The enzyme catalyses ATP + H2O + 4 H(+)(in) = ADP + phosphate + 5 H(+)(out). Functionally, produces ATP from ADP in the presence of a proton gradient across the membrane. The catalytic sites are hosted primarily by the beta subunits. The chain is ATP synthase subunit beta, chloroplastic from Lolium perenne (Perennial ryegrass).